Reading from the N-terminus, the 355-residue chain is uncharacterized protein (355 aa).

132 to 139 (GPPGCGKT) provides a ligand contact to ATP.

Belongs to the AAA ATPase family.

Its subcellular location is the mitochondrion. This is an uncharacterized protein from Schizosaccharomyces pombe (strain 972 / ATCC 24843) (Fission yeast).